Reading from the N-terminus, the 190-residue chain is Putative manganese efflux pump MntP (190 aa).

6 helical membrane-spanning segments follow: residues 3–23 (FLQI…CSVV), 37–57 (LVLA…GWVI), 72–88 (HWIA…KMIW), 111–131 (IILG…LAFV), 138–158 (VALS…WIGH), and 164–184 (FGKW…ANIV).

Belongs to the MntP (TC 9.B.29) family.

The protein localises to the cell membrane. Its function is as follows. Probably functions as a manganese efflux pump. This is Putative manganese efflux pump MntP from Corynebacterium glutamicum (strain R).